We begin with the raw amino-acid sequence, 634 residues long: Transcription termination factor FttA (634 aa).

The interval 4–69 (EEVLENIRKE…ISIRPDPSVL (66 aa)) is KHa. Residues 70–137 (VEPEIAKQKI…WAPKPVRTPP (68 aa)) form a KHb region. A metallo-beta-lactamase N-terminus region spans residues 179–381 (WIRVSFLGGA…LIIESTYGAY (203 aa)). Residues histidine 240, histidine 242, aspartate 244, histidine 245, histidine 327, and aspartate 350 each contribute to the Zn(2+) site. The tract at residues 382–575 (DDVLPEREEA…LQVYTIEGFS (194 aa)) is beta-Casp. The tract at residues 576-634 (GHSDRKQLIKYIRRLKPSPEKIIMVHGEESKCLDFADTVRRLFKKQTYVPMNLDAIRVK) is metallo-beta-lactamase C-terminus. Histidine 601 is a Zn(2+) binding site.

It belongs to the metallo-beta-lactamase superfamily. RNA-metabolizing metallo-beta-lactamase-like family. FttA subfamily. In terms of assembly, homodimer. Interacts with RNA polymerase (RNAP), interacts with the Spt4-Spt5 complex. Zn(2+) is required as a cofactor.

Its activity is regulated as follows. Optimal NaCl concentration is 100 mM for nuclease activity on RNA. Terminates transcription on the whole genome. Termination is linked to FttA-mediated RNA cleavage and does not require NTP hydrolysis. Cleaves endonucleolytically at the RNA exit channel of RNA polymerase (RNAP); the 5'-3' exonuclease activity of this protein degrades the nascent RNA released from RNAP. Its function is as follows. An endoribonuclease with no apparent exonuclease activity, has low activity on single-stranded DNA (endodeoxyribonuclease, endoDNase). The polypeptide is Transcription termination factor FttA (Methanocaldococcus jannaschii (strain ATCC 43067 / DSM 2661 / JAL-1 / JCM 10045 / NBRC 100440) (Methanococcus jannaschii)).